A 510-amino-acid chain; its full sequence is NAD(P)H-quinone oxidoreductase subunit 2 A, chloroplastic (510 aa).

The next 13 helical transmembrane spans lie at 24-44 (LLLFHGSFIFPECILIFGLIL), 57-77 (IPWLYFISSTSLVMSITALLF), 99-119 (IFQFLILLCSTLCIPLSVEYI), 124-144 (MAITEFLLFVLTATLGGMFLC), 149-169 (LITIFVAPECFSLCSYLLSGY), 183-203 (YLLMGGASSSILVHGFSWLYG), 227-247 (PGISIALIFITVGIGFKLSPA), 295-315 (WHLLLEILAILSMILGNLIAI), 323-343 (MLAYSSIGQIGYVIIGIIVGD), 347-367 (GYASMITYMLFYISMNLGTFA), 395-415 (ALSSALCLLSLGGLPPLAGFF), 418-438 (LHLFWCGWQAGLYFLVSIGLL), and 484-504 (MIVCVIASTIPGISMNPIIAI).

This sequence belongs to the complex I subunit 2 family. In terms of assembly, NDH is composed of at least 16 different subunits, 5 of which are encoded in the nucleus.

The protein localises to the plastid. The protein resides in the chloroplast thylakoid membrane. The catalysed reaction is a plastoquinone + NADH + (n+1) H(+)(in) = a plastoquinol + NAD(+) + n H(+)(out). It carries out the reaction a plastoquinone + NADPH + (n+1) H(+)(in) = a plastoquinol + NADP(+) + n H(+)(out). In terms of biological role, NDH shuttles electrons from NAD(P)H:plastoquinone, via FMN and iron-sulfur (Fe-S) centers, to quinones in the photosynthetic chain and possibly in a chloroplast respiratory chain. The immediate electron acceptor for the enzyme in this species is believed to be plastoquinone. Couples the redox reaction to proton translocation, and thus conserves the redox energy in a proton gradient. The chain is NAD(P)H-quinone oxidoreductase subunit 2 A, chloroplastic from Platanus occidentalis (Sycamore).